The sequence spans 735 residues: Peroxisomal multifunctional enzyme type 2 (735 aa).

The (3R)-hydroxyacyl-CoA dehydrogenase stretch occupies residues 1–305 (MASPLRFDGR…VEVLHKVDSE (305 aa)). NAD(+)-binding positions include 13-37 (LVTGAGGGLGRAYALAFAERGALVI), Leu-21, and Asp-40. Lys-46 carries the post-translational modification N6-acetyllysine; alternate. Lys-46 is modified (N6-succinyllysine; alternate). Residue Ser-52 is modified to Phosphoserine. 2 positions are modified to N6-succinyllysine: Lys-57 and Lys-68. 75-76 (SV) contacts NAD(+). An N6-succinyllysine modification is found at Lys-84. Asn-99 lines the NAD(+) pocket. Ser-151 is a binding site for substrate. The active-site Proton acceptor is the Tyr-164. NAD(+) contacts are provided by residues 164–168 (YSAAK) and 196–199 (AGSR). The residue at position 265 (Thr-265) is a Phosphothreonine. N6-succinyllysine is present on Lys-275. Ser-304 and Ser-308 each carry phosphoserine. An enoyl-CoA hydratase 2 region spans residues 321-621 (SGFVGAVGHK…TQTPSEGGEL (301 aa)). Lys-355 bears the N6-succinyllysine mark. 405 to 406 (HG) contacts (3R)-3-hydroxydecanoyl-CoA. At Lys-423 the chain carries N6-succinyllysine. Residues Lys-434, 509–514 (DWNPLH), Gly-532, and Phe-562 contribute to the (3R)-3-hydroxydecanoyl-CoA site. Positions 483 to 599 (VPNRPPDAVL…HETGDVVISN (117 aa)) constitute a MaoC-like domain. At Lys-564 the chain carries N6-acetyllysine. An N6-succinyllysine mark is found at Lys-578 and Lys-662. Positions 623-735 (SALVFGEIGR…QMILKDYAKL (113 aa)) constitute an SCP2 domain. Lys-668 carries the N6-acetyllysine modification. Position 705 (Gln-705) interacts with substrate. Position 706 is an N6-acetyllysine (Lys-706). Gln-723 serves as a coordination point for substrate. Residue Lys-724 is modified to N6-succinyllysine. Positions 733–735 (AKL) match the Microbody targeting signal motif.

It belongs to the short-chain dehydrogenases/reductases (SDR) family. In terms of assembly, homodimer. In terms of tissue distribution, present in many tissues with highest concentrations in liver and kidney.

Its subcellular location is the peroxisome. The catalysed reaction is a (3R)-3-hydroxyacyl-CoA + NAD(+) = a 3-oxoacyl-CoA + NADH + H(+). The enzyme catalyses (24R,25R)-3alpha,7alpha,12alpha,24-tetrahydroxy-5beta-cholestan-26-oyl-CoA = (24E)-3alpha,7alpha,12alpha-trihydroxy-5beta-cholest-24-en-26-oyl-CoA + H2O. It carries out the reaction a (3R)-3-hydroxyacyl-CoA = a (2E)-enoyl-CoA + H2O. It catalyses the reaction (2E)-octenoyl-CoA + H2O = (3R)-hydroxyoctanoyl-CoA. The catalysed reaction is (3R)-hydroxyoctanoyl-CoA + NAD(+) = 3-oxooctanoyl-CoA + NADH + H(+). The enzyme catalyses (3R)-hydroxyhexadecanoyl-CoA + NAD(+) = 3-oxohexadecanoyl-CoA + NADH + H(+). It carries out the reaction (2E)-hexadecenedioyl-CoA + H2O = (3R)-hydroxyhexadecanedioyl-CoA. It catalyses the reaction (3R)-hydroxyhexadecanedioyl-CoA + NAD(+) = 3-oxohexadecanedioyl-CoA + NADH + H(+). The catalysed reaction is (3R)-hydroxyhexadecanoyl-CoA = (2E)-hexadecenoyl-CoA + H2O. The enzyme catalyses (3R)-3-hydroxydecanoyl-CoA = (2E)-decenoyl-CoA + H2O. It carries out the reaction (3R)-3-hydroxydecanoyl-CoA + NAD(+) = 3-oxodecanoyl-CoA + NADH + H(+). It catalyses the reaction (24R,25R)-3alpha,7alpha,12alpha,24-tetrahydroxy-5beta-cholestan-26-oyl-CoA + NAD(+) = 3alpha,7alpha,12alpha-trihydroxy-24-oxo-5beta-cholestan-26-oyl-CoA + NADH + H(+). The protein operates within lipid metabolism; fatty acid beta-oxidation. In terms of biological role, bifunctional enzyme acting on the peroxisomal fatty acid beta-oxidation pathway. Catalyzes two of the four reactions in fatty acid degradation: hydration of 2-enoyl-CoA (trans-2-enoyl-CoA) to produce (3R)-3-hydroxyacyl-CoA, and dehydrogenation of (3R)-3-hydroxyacyl-CoA to produce 3-ketoacyl-CoA (3-oxoacyl-CoA), which is further metabolized by SCPx. Can use straight-chain and branched-chain fatty acids, as well as bile acid intermediates as substrates. The chain is Peroxisomal multifunctional enzyme type 2 from Mus musculus (Mouse).